The chain runs to 132 residues: Agouti-signaling protein (132 aa).

Positions 1 to 22 (MDVTRLLLATLLVFLCFFTAYS) are cleaved as a signal peptide. Asparagine 39 is a glycosylation site (N-linked (GlcNAc...) asparagine). Residues 61–87 (QISRKEAEKKRSSKKEASMKKVARPRT) are disordered. Basic and acidic residues predominate over residues 63-79 (SRKEAEKKRSSKKEASM). Disulfide bonds link cysteine 93–cysteine 108, cysteine 100–cysteine 114, cysteine 107–cysteine 125, cysteine 111–cysteine 132, and cysteine 116–cysteine 123. One can recognise an Agouti domain in the interval 93-132 (CVATRDSCKPPAPACCDPCAFCQCRFFRSACSCRVLSLNC).

It localises to the secreted. Its function is as follows. Involved in the regulation of melanogenesis. The binding of ASP to MC1R precludes alpha-MSH initiated signaling and thus blocks production of cAMP, leading to a down-regulation of eumelanogenesis (brown/black pigment) and thus increasing synthesis of pheomelanin (yellow/red pigment). This Macaca hecki (Heck's macaque) protein is Agouti-signaling protein (ASIP).